The sequence spans 327 residues: tRNA-dihydrouridine(20/20a) synthase (327 aa).

FMN is bound by residues 17-19 (PML) and Q69. C99 (proton donor) is an active-site residue. FMN contacts are provided by residues K138, H170, 210 to 212 (NGG), and 232 to 233 (GR).

This sequence belongs to the Dus family. DusA subfamily. FMN is required as a cofactor.

It catalyses the reaction 5,6-dihydrouridine(20) in tRNA + NADP(+) = uridine(20) in tRNA + NADPH + H(+). The enzyme catalyses 5,6-dihydrouridine(20) in tRNA + NAD(+) = uridine(20) in tRNA + NADH + H(+). It carries out the reaction 5,6-dihydrouridine(20a) in tRNA + NADP(+) = uridine(20a) in tRNA + NADPH + H(+). The catalysed reaction is 5,6-dihydrouridine(20a) in tRNA + NAD(+) = uridine(20a) in tRNA + NADH + H(+). Functionally, catalyzes the synthesis of 5,6-dihydrouridine (D), a modified base found in the D-loop of most tRNAs, via the reduction of the C5-C6 double bond in target uridines. Specifically modifies U20 and U20a in tRNAs. This is tRNA-dihydrouridine(20/20a) synthase from Pasteurella multocida (strain Pm70).